The following is a 506-amino-acid chain: NAD(P)H-quinone oxidoreductase subunit 2 (506 aa).

Helical transmembrane passes span 14-34 (AIIPEAFILLGIVGTLLVDLA), 42-62 (WAPSICYLSIGSSLLSLTLQW), 79-99 (LAIAFRAIIALSTLVSLLISW), 108-128 (PIGEFAAIVLSATLGAMLLCG), 132-152 (LISVFISLETLSVASYLLSGY), 167-187 (LLVGSAAAAVYLYGSSFLYGL), 206-226 (FITSLALVFVLSTVAFKIAAV), 240-260 (PTPVVAFLSVGSKTAGFAFAI), 276-296 (LLFTILAILSMALGNVVALAQ), 302-322 (MLAYSSIGQAGFVMIGIVSGT), 330-350 (VLYLAAYLFMNLGAFSCVILF), 374-394 (LGLSLCLLSLGGLPPMLGFFG), and 409-429 (LLVIVGLVTSVISIYYYISVI).

The protein belongs to the complex I subunit 2 family. As to quaternary structure, NDH-1 can be composed of about 15 different subunits; different subcomplexes with different compositions have been identified which probably have different functions.

The protein localises to the cellular thylakoid membrane. It catalyses the reaction a plastoquinone + NADH + (n+1) H(+)(in) = a plastoquinol + NAD(+) + n H(+)(out). It carries out the reaction a plastoquinone + NADPH + (n+1) H(+)(in) = a plastoquinol + NADP(+) + n H(+)(out). Functionally, NDH-1 shuttles electrons from an unknown electron donor, via FMN and iron-sulfur (Fe-S) centers, to quinones in the respiratory and/or the photosynthetic chain. The immediate electron acceptor for the enzyme in this species is believed to be plastoquinone. Couples the redox reaction to proton translocation, and thus conserves the redox energy in a proton gradient. Cyanobacterial NDH-1 also plays a role in inorganic carbon-concentration. In Prochlorococcus marinus (strain MIT 9301), this protein is NAD(P)H-quinone oxidoreductase subunit 2.